The chain runs to 119 residues: MPRVKRGVTARARHKKVLALAKGFRGRRGNVFRIAKEAVMKAGQYAYRDRRTKKRVFRQLWIARINAASRSFGMTYSQFANGLKKAGIEIDRKVLSDMAIHDSAAFGAIVEQVKAKLAA.

The protein belongs to the bacterial ribosomal protein bL20 family.

Functionally, binds directly to 23S ribosomal RNA and is necessary for the in vitro assembly process of the 50S ribosomal subunit. It is not involved in the protein synthesizing functions of that subunit. The protein is Large ribosomal subunit protein bL20 of Polaromonas sp. (strain JS666 / ATCC BAA-500).